The following is a 152-amino-acid chain: uncharacterized protein (152 aa).

The helical transmembrane segment at 7-27 (TLSVIVFLISLIIIFGIYFSS) threads the bilayer.

The protein resides in the membrane. This is an uncharacterized protein from Methanocaldococcus jannaschii (strain ATCC 43067 / DSM 2661 / JAL-1 / JCM 10045 / NBRC 100440) (Methanococcus jannaschii).